The chain runs to 598 residues: Glutamyl-tRNA(Gln) amidotransferase subunit E (598 aa).

It belongs to the GatB/GatE family. GatE subfamily. As to quaternary structure, heterodimer of GatD and GatE.

It catalyses the reaction L-glutamyl-tRNA(Gln) + L-glutamine + ATP + H2O = L-glutaminyl-tRNA(Gln) + L-glutamate + ADP + phosphate + H(+). In terms of biological role, allows the formation of correctly charged Gln-tRNA(Gln) through the transamidation of misacylated Glu-tRNA(Gln) in organisms which lack glutaminyl-tRNA synthetase. The reaction takes place in the presence of glutamine and ATP through an activated gamma-phospho-Glu-tRNA(Gln). The GatDE system is specific for glutamate and does not act on aspartate. The chain is Glutamyl-tRNA(Gln) amidotransferase subunit E from Thermoplasma volcanium (strain ATCC 51530 / DSM 4299 / JCM 9571 / NBRC 15438 / GSS1).